The following is a 382-amino-acid chain: MARDYYGILGVDRNATESEIKKAYRKLARKYHPDVNPGEEAAEKFREASVAHEVLTDPDKRRIVDMGGDPMEQGGGAGAGGFGGGFGGSGGLGDIFDAFFGGGAGGSRGPRSRVQPGSDTLWRTSITLEEAYKGAKKDLTLDTAVLCTKCHGSGSASDKKPVTCGTCNGAGEIQEVQRSFLGNVMTSRPCHTCDGTGEIIPDPCTECAGDGRVRARRDIVANIPAGIQSGMRIRMAGQGEVGAGGGPAGDLYIEVMVRPHAIFTRDGDDLHASIKVPMFDAALGTELDVESLTGEEVKITIPAGTQPNDVITLDGEGMPKLRAEGHGNLMAHVDLFVPTDLDDRTRELLEEIRNHRSDNASVHREGGEESGFFDKLRNKFRK.

The J domain occupies 4 to 68; the sequence is DYYGILGVDR…DKRRIVDMGG (65 aa). Residues 134 to 216 form a CR-type zinc finger; that stretch reads GAKKDLTLDT…CAGDGRVRAR (83 aa). Zn(2+) is bound by residues C147, C150, C164, C167, C190, C193, C204, and C207. CXXCXGXG motif repeat units follow at residues 147–154, 164–171, 190–197, and 204–211; these read CTKCHGSG, CGTCNGAG, CHTCDGTG, and CTECAGDG.

This sequence belongs to the DnaJ family. Homodimer. Zn(2+) serves as cofactor.

It localises to the cytoplasm. Its function is as follows. Participates actively in the response to hyperosmotic and heat shock by preventing the aggregation of stress-denatured proteins and by disaggregating proteins, also in an autonomous, DnaK-independent fashion. Unfolded proteins bind initially to DnaJ; upon interaction with the DnaJ-bound protein, DnaK hydrolyzes its bound ATP, resulting in the formation of a stable complex. GrpE releases ADP from DnaK; ATP binding to DnaK triggers the release of the substrate protein, thus completing the reaction cycle. Several rounds of ATP-dependent interactions between DnaJ, DnaK and GrpE are required for fully efficient folding. Also involved, together with DnaK and GrpE, in the DNA replication of plasmids through activation of initiation proteins. This is Chaperone protein DnaJ 1 from Corynebacterium glutamicum (strain ATCC 13032 / DSM 20300 / JCM 1318 / BCRC 11384 / CCUG 27702 / LMG 3730 / NBRC 12168 / NCIMB 10025 / NRRL B-2784 / 534).